We begin with the raw amino-acid sequence, 122 residues long: Large ribosomal subunit protein uL14 (122 aa).

It belongs to the universal ribosomal protein uL14 family. In terms of assembly, part of the 50S ribosomal subunit. Forms a cluster with proteins L3 and L19. In the 70S ribosome, L14 and L19 interact and together make contacts with the 16S rRNA in bridges B5 and B8.

In terms of biological role, binds to 23S rRNA. Forms part of two intersubunit bridges in the 70S ribosome. The polypeptide is Large ribosomal subunit protein uL14 (Chlorobaculum tepidum (strain ATCC 49652 / DSM 12025 / NBRC 103806 / TLS) (Chlorobium tepidum)).